We begin with the raw amino-acid sequence, 743 residues long: Beta-galactosidase (743 aa).

The active-site Proton donor is the E388. Catalysis depends on E453, which acts as the Nucleophile.

It belongs to the glycosyl hydrolase 2 family. Homodimer.

It carries out the reaction Hydrolysis of terminal non-reducing beta-D-galactose residues in beta-D-galactosides.. In terms of biological role, beta-galactosidase. This Thermoanaerobacter pseudethanolicus (strain ATCC 33223 / 39E) (Clostridium thermohydrosulfuricum) protein is Beta-galactosidase (lacZ).